Here is a 144-residue protein sequence, read N- to C-terminus: Large ribosomal subunit protein uL16 (144 aa).

The protein belongs to the universal ribosomal protein uL16 family. In terms of assembly, part of the 50S ribosomal subunit.

Its function is as follows. Binds 23S rRNA and is also seen to make contacts with the A and possibly P site tRNAs. The protein is Large ribosomal subunit protein uL16 of Oceanobacillus iheyensis (strain DSM 14371 / CIP 107618 / JCM 11309 / KCTC 3954 / HTE831).